A 251-amino-acid chain; its full sequence is Cell division protein ZapD (251 aa).

It belongs to the ZapD family. Interacts with FtsZ.

The protein localises to the cytoplasm. In terms of biological role, cell division factor that enhances FtsZ-ring assembly. Directly interacts with FtsZ and promotes bundling of FtsZ protofilaments, with a reduction in FtsZ GTPase activity. The chain is Cell division protein ZapD from Burkholderia lata (strain ATCC 17760 / DSM 23089 / LMG 22485 / NCIMB 9086 / R18194 / 383).